The primary structure comprises 508 residues: Rhamnogalacturonan I rhamnosyltransferase 1 (508 aa).

A helical; Signal-anchor for type II membrane protein membrane pass occupies residues 41–63 (LWMIRAVTVLLLWSCFVHLMALG). 3 N-linked (GlcNAc...) asparagine glycosylation sites follow: N136, N202, and N223. 277-279 (HLR) is a substrate binding site. N391 is a glycosylation site (N-linked (GlcNAc...) asparagine).

The protein belongs to the glycosyltransferase GT106 family. Highly expressed in siliques. Expressed in stems and flowers. Expressed at low levels in roots and rosette leaves.

The protein resides in the golgi apparatus membrane. It catalyses the reaction alpha-D-galacturonosyl-[(1-&gt;2)-alpha-L-rhamnosyl-(1-&gt;4)-alpha-D-galacturonosyl](n) + UDP-beta-L-rhamnose = [(1-&gt;2)-alpha-L-rhamnosyl-(1-&gt;4)-alpha-D-galacturonosyl](n+1) + UDP + H(+). It functions in the pathway glycan metabolism; pectin biosynthesis. Its function is as follows. Glycosyltransferase involved in the formation of rhamnogalacturonan I (RG-I) oligosaccharides in the seed coat mucilage, which is a specialized cell wall with abundant RG-I. Transfers the rhamnose residue from UDP-beta-L-rhamnose to RG-I oligosaccharides. Prefers RG-I oligosaccharides with a degree of polymerization of 5 or larger than 5. Does not act on oligosaccharides with a degree of polymerization of 4 or smaller than 4. Does not require metal ions for its activity. The chain is Rhamnogalacturonan I rhamnosyltransferase 1 from Arabidopsis thaliana (Mouse-ear cress).